A 316-amino-acid chain; its full sequence is Ribosomal RNA small subunit methyltransferase H (316 aa).

S-adenosyl-L-methionine is bound by residues 35–37 (AGH), aspartate 55, phenylalanine 84, aspartate 105, and glutamine 112.

This sequence belongs to the methyltransferase superfamily. RsmH family.

It localises to the cytoplasm. The catalysed reaction is cytidine(1402) in 16S rRNA + S-adenosyl-L-methionine = N(4)-methylcytidine(1402) in 16S rRNA + S-adenosyl-L-homocysteine + H(+). Its function is as follows. Specifically methylates the N4 position of cytidine in position 1402 (C1402) of 16S rRNA. This chain is Ribosomal RNA small subunit methyltransferase H, found in Streptococcus pneumoniae (strain Hungary19A-6).